Consider the following 898-residue polypeptide: Coiled-coil domain-containing protein 186 (898 aa).

3 disordered regions span residues 1-43 (MSET…NESK), 68-95 (NYIPDHGGGEDSCAKTDTGSENSEQIAN), and 702-749 (RRKL…SSVA). Ser2 is subject to N-acetylserine. Positions 82–95 (KTDTGSENSEQIAN) are enriched in polar residues. Positions 201 to 712 (KYLQQEHIIK…RKLDQVESGS (512 aa)) form a coiled coil. Over residues 703 to 717 (RKLDQVESGSYDKEV) the composition is skewed to basic and acidic residues. The span at 718–734 (SSMGSRSSSSGSLNARS) shows a compositional bias: low complexity. Phosphoserine is present on Ser740. 2 coiled-coil regions span residues 759 to 803 (AMLI…IQSY) and 855 to 894 (KLQAVLEDTLLKNITLKENLQTLGTEIERLIKHQHELEQR).

The sequence is that of Coiled-coil domain-containing protein 186 (CCDC186) from Homo sapiens (Human).